A 92-amino-acid polypeptide reads, in one-letter code: Putative membrane protein insertion efficiency factor (92 aa).

Belongs to the UPF0161 family.

Its subcellular location is the cell membrane. In terms of biological role, could be involved in insertion of integral membrane proteins into the membrane. The polypeptide is Putative membrane protein insertion efficiency factor (Tropheryma whipplei (strain TW08/27) (Whipple's bacillus)).